The sequence spans 82 residues: Sulfur carrier protein TusA (82 aa).

Cys19 acts as the Cysteine persulfide intermediate in catalysis.

Belongs to the sulfur carrier protein TusA family. In terms of assembly, interacts with IscS.

Its subcellular location is the cytoplasm. It participates in tRNA modification. Functionally, sulfur carrier protein involved in sulfur trafficking in the cell. Part of a sulfur-relay system required for 2-thiolation during synthesis of 2-thiouridine of the modified wobble base 5-methylaminomethyl-2-thiouridine (mnm(5)s(2)U) in tRNA. Interacts with IscS and stimulates its cysteine desulfurase activity. Accepts an activated sulfur from IscS, which is then transferred to TusD, and thus determines the direction of sulfur flow from IscS to 2-thiouridine formation. Also appears to be involved in sulfur transfer for the biosynthesis of molybdopterin. This is Sulfur carrier protein TusA from Edwardsiella ictaluri (strain 93-146).